Consider the following 176-residue polypeptide: Flavodoxin 1 (176 aa).

Positions Thr4–Ser165 constitute a Flavodoxin-like domain.

It belongs to the flavodoxin family. The cofactor is FMN.

In terms of biological role, low-potential electron donor to a number of redox enzymes (Potential). Involved in the reactivation of inactive cob(II)alamin in methionine synthase. The chain is Flavodoxin 1 (fldA) from Salmonella typhimurium (strain LT2 / SGSC1412 / ATCC 700720).